Reading from the N-terminus, the 103-residue chain is Sperm-associated antigen 11B (103 aa).

The first 25 residues, 1–25 (MRQRLLPSVTSLLLVALLFPGSSQA), serve as a signal peptide directing secretion. N-linked (GlcNAc...) asparagine glycosylation occurs at asparagine 29.

Belongs to the SPAG11 family. In terms of tissue distribution, specifically expressed in caput and proximal corpus of epididymis (at protein level). Present in the epididymal epithelium and on the sperm surface, with a subacrosomal equatorial distribution on the sperm head (at protein level).

The protein resides in the secreted. Has antimicrobial activity against E.coli. Plays a role in the defense response in the male reproductive tract, contributing to sperm maturation, storage and protection. The chain is Sperm-associated antigen 11B from Homo sapiens (Human).